A 140-amino-acid chain; its full sequence is Gas vesicle protein O (140 aa).

Over residues 1–14 (MSDQGNEHANHDGI) the composition is skewed to basic and acidic residues. The tract at residues 1 to 61 (MSDQGNEHAN…DSTIGLSDAQ (61 aa)) is disordered. Residues 39–56 (QTASDEAVSNQSPDSTIG) are compositionally biased toward polar residues.

Belongs to the gas vesicle GvpO family. As to quaternary structure, forms homodimers, forms a GvpN-GvpO heterodimer, interacts with GvpC, GvpF, GvpI and GvpL, might interact with GvpA.

It is found in the gas vesicle. It localises to the cytoplasm. In terms of biological role, a minor component of the gas vesicle (GV), may play a role in transcription and/or RNA stability and/or in GV assembly. Gas vesicles are small, hollow, gas filled protein structures found in some microorganisms. They allow positioning of halobacteria at the optimal depth for growth in the poorly aerated shallow brine pools of their habitat. Its function is as follows. Expression of a 9.5 kb mc-vac DNA fragment containing 2 divergently transcribed regions (gvpD-gvpE-gvpF-gvpG-gvpH-gvpI-gvpJ-gvpK-gvpL-gvpM and gvpA-gvpC-gvpN-gvpO) allows H.volcanii to produce gas vesicles. This is Gas vesicle protein O from Haloferax mediterranei (strain ATCC 33500 / DSM 1411 / JCM 8866 / NBRC 14739 / NCIMB 2177 / R-4) (Halobacterium mediterranei).